A 233-amino-acid polypeptide reads, in one-letter code: Ribulose-phosphate 3-epimerase (233 aa).

Ser16 contributes to the substrate binding site. 3 residues coordinate a divalent metal cation: His41, Asp43, and His74. The active-site Proton acceptor is the Asp43. Substrate is bound by residues His74, 150-153 (GFCG), 185-187 (DGG), and 207-208 (AS). Asp185 contributes to the a divalent metal cation binding site. The active-site Proton donor is Asp185.

It belongs to the ribulose-phosphate 3-epimerase family. It depends on a divalent metal cation as a cofactor.

The enzyme catalyses D-ribulose 5-phosphate = D-xylulose 5-phosphate. It participates in carbohydrate degradation. In terms of biological role, catalyzes the reversible epimerization of D-ribulose 5-phosphate to D-xylulose 5-phosphate. The chain is Ribulose-phosphate 3-epimerase from Chlamydia trachomatis serovar D (strain ATCC VR-885 / DSM 19411 / UW-3/Cx).